A 332-amino-acid chain; its full sequence is 2-hydroxyacid dehydrogenase homolog 1 (332 aa).

NAD(+) contacts are provided by residues 154–155 (RI), 233–235 (TSR), and D259. R235 is an active-site residue. E264 is an active-site residue. The Proton donor role is filled by H296. Residue 296 to 299 (HQAF) coordinates NAD(+).

The protein belongs to the D-isomer specific 2-hydroxyacid dehydrogenase family.

The protein resides in the cytoplasm. Its subcellular location is the nucleus. This is 2-hydroxyacid dehydrogenase homolog 1 from Schizosaccharomyces pombe (strain 972 / ATCC 24843) (Fission yeast).